The sequence spans 236 residues: Protein CUSTOS (236 aa).

2 disordered regions span residues 1 to 57 (MSES…GTTP) and 83 to 236 (VEPA…KKDE). Composition is skewed to basic and acidic residues over residues 10 to 51 (NTAR…HDGN) and 156 to 165 (EKTEEKSTKE). Residues 173-181 (KMKKKKKRK) carry the Nucleolar localization signal (NLS1) motif. Over residues 182–196 (TSSEESQDKVNHQTE) the composition is skewed to basic and acidic residues. Residues 197-210 (KQSNVEGNQEQTTA) show a composition bias toward polar residues. The Nucleolar localization signal (NLS2) signature appears at 211–219 (GERLKKKKK). The segment covering 214–227 (LKKKKKKKKKKRKK) has biased composition (basic residues).

The protein belongs to the CUSTOS family. As to quaternary structure, interacts (via NLS1 and NLS2) with dvl2; the interaction is negatively regulated by Wnt stimulation. Interacts with csnk1a1. Interacts with ctnnb1; the interaction is positively regulated by Wnt stimulation. In terms of processing, phosphorylated by ck1/csnk1a1.

It localises to the nucleus envelope. In terms of biological role, essential for Spemann-Mangold organizer formation and subsequent anterior head development in the embryo. Inhibits canonical Wnt signaling pathway by antagonizing nuclear import of beta-catenin (ctnnb1) during embryogenesis. The protein is Protein CUSTOS of Danio rerio (Zebrafish).